We begin with the raw amino-acid sequence, 268 residues long: MRLVLEEPFKRLWNGRDPFEAVEALQGKVYRELEGRRTLRTEVDGRGYFVKIHRGIGWGEIAKNLLTAKLPVLGARQEWQAIRRLHEAGVATMTAVAYGERGSDPARQHSFIVTEELAPTVDLEVFSQDWRERPPPPRLKRALVEAVARMVGDMHRAGVNHRDCYICHFLLHTDKPVSADDFRLSVIDLHRAQTRDATPKRWRNKDLAALYFSALDIGLTRRDKLRFLRTYFRRPLREILRDEAGLLAWMERKAEKLYERKQRYGDLL.

3 positions are modified to phosphotyrosine; by autocatalysis: Tyr-30, Tyr-48, and Tyr-98. The active site involves Asp-163. Phosphotyrosine; by autocatalysis is present on residues Tyr-165, Tyr-211, Tyr-231, Tyr-258, and Tyr-264.

The protein belongs to the protein kinase superfamily. KdkA/RfaP family. In terms of assembly, interacts with acyl-AcpP. The WaaP hydrophobic channel can accommodate acyl chains of different lengths, but myristyl-ACP is likely its physiological binding partner. The cofactor is Mg(2+).

It is found in the cytoplasm. It carries out the reaction an L-alpha-D-Hep-(1-&gt;3)-L-alpha-D-Hep-(1-&gt;5)-[alpha-Kdo-(2-&gt;4)]-alpha-Kdo-(2-&gt;6)-lipid A + ATP = an L-alpha-D-Hep-(1-&gt;3)-4-O-phospho-L-alpha-D-Hep-(1-&gt;5)-[alpha-Kdo-(2-&gt;4)]-alpha-Kdo-(2-&gt;6)-lipid A + ADP + H(+). The enzyme catalyses L-tyrosyl-[protein] + ATP = O-phospho-L-tyrosyl-[protein] + ADP + H(+). Its pathway is bacterial outer membrane biogenesis; LPS core biosynthesis. Its activity is regulated as follows. Acylated-acyl carrier protein (acyl-ACP) acts as a very tightly bound cofactor necessary for the production and stability of active WaaP kinase. Functionally, kinase involved in the biosynthesis of the core oligosaccharide region of lipopolysaccharide (LPS). Catalyzes the phosphorylation of heptose I (HepI), the first heptose added to the Kdo2-lipid A module. Also has protein-tyrosine kinase activity: autophosphorylates on all Tyr residues; in vitro can phosphorylate poly(Glu,Tyr). The polypeptide is Lipopolysaccharide core heptose(I) kinase WaaP (Pseudomonas aeruginosa (strain ATCC 15692 / DSM 22644 / CIP 104116 / JCM 14847 / LMG 12228 / 1C / PRS 101 / PAO1)).